A 404-amino-acid chain; its full sequence is G1/S-specific cyclin-E2 (404 aa).

Residues 1-41 (MSRRSSRLQAKQHAQPNQPDSPQETQIIQAKKRKTAQDVKK) form a disordered region. Over residues 7–28 (RLQAKQHAQPNQPDSPQETQII) the composition is skewed to polar residues. Phosphoserine is present on Ser-21. Position 348 is an N6-lactoyllysine (Lys-348). Residue Ser-383 is modified to Phosphoserine. At Thr-392 the chain carries Phosphothreonine.

It belongs to the cyclin family. Cyclin E subfamily. Interacts with the CDK2 (in vivo) and CDK3 (in vitro) protein kinases to form a serine/threonine kinase holoenzyme complex. The cyclin subunit imparts substrate specificity to the complex. Post-translationally, phosphorylation by CDK2 triggers its release from CDK2 and degradation via the ubiquitin proteasome pathway. In terms of processing, lactylated at Lys-348. Delactylated by SIRT3. Highest levels in adult testis, thymus and brain. Lower levels in placenta, spleen and colon.

Its subcellular location is the nucleus. Essential for the control of the cell cycle at the late G1 and early S phase. The polypeptide is G1/S-specific cyclin-E2 (Ccne2) (Mus musculus (Mouse)).